The following is an 87-amino-acid chain: U3-theraphotoxin-Hhn1a 8 (87 aa).

Residues 1–24 (MVNMKASMFLTFAGLVLLFVVCYA) form the signal peptide. A propeptide spanning residues 25-52 (SGSEEKEFPKEMLSSIFAVDNDFKQEER) is cleaved from the precursor. 3 disulfide bridges follow: Cys54-Cys67, Cys61-Cys72, and Cys66-Cys79.

It belongs to the neurotoxin 10 (Hwtx-1) family. 51 (Hntx-8) subfamily. Hntx-8 sub-subfamily. As to expression, expressed by the venom gland.

The protein resides in the secreted. Its function is as follows. Ion channel inhibitor. This is U3-theraphotoxin-Hhn1a 8 from Cyriopagopus hainanus (Chinese bird spider).